The sequence spans 434 residues: Histidinol dehydrogenase (434 aa).

Positions 130, 188, and 211 each coordinate NAD(+). Residues S237, Q259, and H262 each contribute to the substrate site. Residues Q259 and H262 each contribute to the Zn(2+) site. Active-site proton acceptor residues include E326 and H327. Positions 327, 360, 414, and 419 each coordinate substrate. D360 serves as a coordination point for Zn(2+). H419 contributes to the Zn(2+) binding site.

This sequence belongs to the histidinol dehydrogenase family. In terms of assembly, homodimer. It depends on Zn(2+) as a cofactor.

It carries out the reaction L-histidinol + 2 NAD(+) + H2O = L-histidine + 2 NADH + 3 H(+). The protein operates within amino-acid biosynthesis; L-histidine biosynthesis; L-histidine from 5-phospho-alpha-D-ribose 1-diphosphate: step 9/9. Catalyzes the sequential NAD-dependent oxidations of L-histidinol to L-histidinaldehyde and then to L-histidine. The protein is Histidinol dehydrogenase of Salmonella choleraesuis (strain SC-B67).